Consider the following 326-residue polypeptide: DNA-directed RNA polymerase subunit alpha (326 aa).

The tract at residues methionine 1–glutamate 231 is alpha N-terminal domain (alpha-NTD). The segment at isoleucine 247–lysine 326 is alpha C-terminal domain (alpha-CTD).

The protein belongs to the RNA polymerase alpha chain family. As to quaternary structure, homodimer. The RNAP catalytic core consists of 2 alpha, 1 beta, 1 beta' and 1 omega subunit. When a sigma factor is associated with the core the holoenzyme is formed, which can initiate transcription.

It catalyses the reaction RNA(n) + a ribonucleoside 5'-triphosphate = RNA(n+1) + diphosphate. Functionally, DNA-dependent RNA polymerase catalyzes the transcription of DNA into RNA using the four ribonucleoside triphosphates as substrates. The sequence is that of DNA-directed RNA polymerase subunit alpha from Cupriavidus metallidurans (strain ATCC 43123 / DSM 2839 / NBRC 102507 / CH34) (Ralstonia metallidurans).